The primary structure comprises 446 residues: Exodeoxyribonuclease 7 large subunit (446 aa).

Belongs to the XseA family. As to quaternary structure, heterooligomer composed of large and small subunits.

Its subcellular location is the cytoplasm. It carries out the reaction Exonucleolytic cleavage in either 5'- to 3'- or 3'- to 5'-direction to yield nucleoside 5'-phosphates.. In terms of biological role, bidirectionally degrades single-stranded DNA into large acid-insoluble oligonucleotides, which are then degraded further into small acid-soluble oligonucleotides. The protein is Exodeoxyribonuclease 7 large subunit of Streptococcus gordonii (strain Challis / ATCC 35105 / BCRC 15272 / CH1 / DL1 / V288).